Consider the following 360-residue polypeptide: Probable CCR4-associated factor 1 homolog 1 (360 aa).

Asp37, Glu39, Asp155, and Asp226 together coordinate a divalent metal cation.

Belongs to the CAF1 family. In terms of assembly, component of the CCR4-NOT complex, at least composed of CRR4 and CAF1 proteins. The cofactor is a divalent metal cation.

It localises to the nucleus. The protein localises to the cytoplasm. The catalysed reaction is Exonucleolytic cleavage of poly(A) to 5'-AMP.. Functionally, ubiquitous transcription factor required for a diverse set of processes. It is a component of the CCR4 complex involved in the control of gene expression. This chain is Probable CCR4-associated factor 1 homolog 1 (CAF1-1), found in Arabidopsis thaliana (Mouse-ear cress).